Here is a 1354-residue protein sequence, read N- to C-terminus: RNA-directed RNA polymerase VP1 (1354 aa).

It carries out the reaction RNA(n) + a ribonucleoside 5'-triphosphate = RNA(n+1) + diphosphate. In terms of biological role, RNA-directed RNA polymerase that is involved in transcription and genome replication. Following infection, it catalyzes the synthesis of fully conservative plus strands. After core assembly, which consists in recruitment of one capped plus-strand for each genomic segments and polymerase complexes, the polymerase switches mode and catalyzes the synthesis of complementary minus-strands. This is RNA-directed RNA polymerase VP1 from Cryphonectria parasitica mycoreovirus 1 (strain 9B21) (CpMYRV-1).